Consider the following 397-residue polypeptide: Elongation factor Tu (397 aa).

The tr-type G domain maps to 10-207 (KPHLNIGTIG…AVDAYIPEPE (198 aa)). The segment at 19–26 (GHVDHGKT) is G1. 19-26 (GHVDHGKT) is a binding site for GTP. Residue T26 coordinates Mg(2+). The tract at residues 60-64 (GVTIN) is G2. The segment at 81–84 (DCPG) is G3. GTP-binding positions include 81–85 (DCPGH) and 136–139 (NKVD). Residues 136-139 (NKVD) form a G4 region. The tract at residues 174 to 176 (SAL) is G5.

The protein belongs to the TRAFAC class translation factor GTPase superfamily. Classic translation factor GTPase family. EF-Tu/EF-1A subfamily. Monomer.

It localises to the cytoplasm. It carries out the reaction GTP + H2O = GDP + phosphate + H(+). Its function is as follows. GTP hydrolase that promotes the GTP-dependent binding of aminoacyl-tRNA to the A-site of ribosomes during protein biosynthesis. This Syntrophus aciditrophicus (strain SB) protein is Elongation factor Tu.